The following is a 145-amino-acid chain: 3-dehydroquinate dehydratase 1 (145 aa).

Tyr-24 acts as the Proton acceptor in catalysis. Positions 75, 81, and 88 each coordinate substrate. His-101 acts as the Proton donor in catalysis. Residues Ile-102 to Ser-103 and Arg-112 contribute to the substrate site.

It belongs to the type-II 3-dehydroquinase family. Homododecamer.

The catalysed reaction is 3-dehydroquinate = 3-dehydroshikimate + H2O. It participates in metabolic intermediate biosynthesis; chorismate biosynthesis; chorismate from D-erythrose 4-phosphate and phosphoenolpyruvate: step 3/7. Its function is as follows. Catalyzes a trans-dehydration via an enolate intermediate. This chain is 3-dehydroquinate dehydratase 1 (aroQ1), found in Agrobacterium fabrum (strain C58 / ATCC 33970) (Agrobacterium tumefaciens (strain C58)).